The chain runs to 465 residues: MFIDGKWIIREDIDVFDPYTLENIEKITALDREETKNAIEVTEKHKEIMKNLSPSKRYKILMKVAEHLSSKKDFFAKTISIDVGKPIKQSKIEVDRTLTALKLSAFYAKELRGETINSENGLIFTKKEPLGVIGAITPFNFPLNLATHKIGPAIATGNSVVLHPSSKAPIVAIYLTKIIEHVLKQMDIPRGVFNLATGNGEIVGDEISKNDNVNMVSFTGSVEVGESISKNAKMKKVTLELGGNNPMIVLKDSDIKLAAKSAVKSKFLNAGQVCISVGQVLVEEEVVETFTKYVIEETKKLILGNPLDKNTDIGPLISPESALRIENLIKQSVSEGGELLIGGNRQNSLISPAVINIDEENILSKIETFGPILPILTVKDSEEAVNIANNSKYGLQAGLFTNNINNAMKIADELEYGGIMINSSPTFRKDNMPFGGVKKSGLGREGIKYTVEEMSETKTVVIHNI.

An NAD(+)-binding site is contributed by 220–225 (GSVEVG). Catalysis depends on residues E240 and C274.

It belongs to the aldehyde dehydrogenase family. In terms of assembly, homotetramer.

The enzyme catalyses (S)-lactaldehyde + NAD(+) + H2O = (S)-lactate + NADH + 2 H(+). It participates in cofactor biosynthesis; coenzyme F420 biosynthesis. Its function is as follows. Involved in F420 biosynthesis through the oxidation of lactaldehyde to lactate. The chain is Lactaldehyde dehydrogenase from Methanococcus maripaludis (strain DSM 14266 / JCM 13030 / NBRC 101832 / S2 / LL).